Reading from the N-terminus, the 262-residue chain is MRILVCAKQVPDTNEVKIDPKTGTMIREGVPSILNPDDANALEAALVIKDENPGTEVIVMTMGPPQASEMLRECLAMGADEAYLLSDRAFGGADTWATSATLAAGIKKVKKVDLVLAGRQAIDGDTAQVGSQIAQRLKMPVVTYVEDIKIEDKKAIVHRQMEDGYEVIEVQLPCLLTCVKELNDPRYMSVGGIMDAYEQPITIWNHEDIGLSPEACGLNASPTQVFRSFSPPAKGGGEMITGTTVNEVAGSLVSKLKEKHII.

This sequence belongs to the ETF beta-subunit/FixA family. As to quaternary structure, part of the homotrimeric caffeyl-CoA reductase-Etf complex composed of (R)-2-hydroxyisocaproyl-CoA dehydratase CarC, and the electron transfer flavoprotein (ETF) alpha (CarE) and beta (CarD) subunits. FAD serves as cofactor. Requires AMP as cofactor.

It localises to the cytoplasm. The enzyme catalyses hydrocaffeoyl-CoA + 2 reduced [2Fe-2S]-[ferredoxin] + 2 NAD(+) = (E)-caffeoyl-CoA + 2 oxidized [2Fe-2S]-[ferredoxin] + 2 NADH. In terms of biological role, caffeyl-CoA reductase-Etf complex catalyzes the reduction of caffeyl-CoA to yield hydrocaffeyl-CoA. It couples the endergonic ferredoxin reduction with NADH as reductant to the exergonic reduction of caffeoyl-CoA with the same reductant. It uses the mechanism of electron bifurcation to overcome the steep energy barrier in ferredoxin reduction. The electron transfer flavoprotein (Etf) mediates the electron transfer between the different donors and acceptors. The complex can also reduce 4-coumaroyl-CoA and feruloyl-CoA. This chain is Caffeyl-CoA reductase-Etf complex subunit CarD, found in Acetobacterium woodii (strain ATCC 29683 / DSM 1030 / JCM 2381 / KCTC 1655 / WB1).